The sequence spans 165 residues: Type 3 secretion system regulator YopR (165 aa).

This sequence belongs to the YopR family.

The protein resides in the secreted. In terms of biological role, may be involved in the regulation of the assembly of the type III secretion system (T3SS), also called injectisome, which is used to inject bacterial effector proteins into eukaryotic host cells. May control the secretion and/or polymerization of YscF/SctF, the principal component of the needle filament, thereby impacting the assembly of the T3SS. Involved in pathogenesis. The polypeptide is Type 3 secretion system regulator YopR (Yersinia pestis).